A 599-amino-acid polypeptide reads, in one-letter code: Elongation factor 4 (599 aa).

Residues 5–187 (KNIRNFSIIA…QLVERIPAPE (183 aa)) enclose the tr-type G domain. Residues 17–22 (DHGKST) and 134–137 (NKID) contribute to the GTP site.

The protein belongs to the TRAFAC class translation factor GTPase superfamily. Classic translation factor GTPase family. LepA subfamily.

The protein resides in the cell inner membrane. The enzyme catalyses GTP + H2O = GDP + phosphate + H(+). In terms of biological role, required for accurate and efficient protein synthesis under certain stress conditions. May act as a fidelity factor of the translation reaction, by catalyzing a one-codon backward translocation of tRNAs on improperly translocated ribosomes. Back-translocation proceeds from a post-translocation (POST) complex to a pre-translocation (PRE) complex, thus giving elongation factor G a second chance to translocate the tRNAs correctly. Binds to ribosomes in a GTP-dependent manner. This Alcanivorax borkumensis (strain ATCC 700651 / DSM 11573 / NCIMB 13689 / SK2) protein is Elongation factor 4.